A 368-amino-acid polypeptide reads, in one-letter code: tRNA-specific 2-thiouridylase MnmA (368 aa).

ATP contacts are provided by residues 11–18 (GMSGGVDS) and methionine 37. Residues 97–99 (NPD) form an interaction with target base in tRNA region. The active-site Nucleophile is the cysteine 102. A disulfide bridge links cysteine 102 with cysteine 199. Glycine 127 is a binding site for ATP. An interaction with tRNA region spans residues 149–151 (KDQ). Cysteine 199 acts as the Cysteine persulfide intermediate in catalysis. Residues 311–312 (RY) are interaction with tRNA.

It belongs to the MnmA/TRMU family. As to quaternary structure, interacts with TusE.

The protein localises to the cytoplasm. The enzyme catalyses S-sulfanyl-L-cysteinyl-[protein] + uridine(34) in tRNA + AH2 + ATP = 2-thiouridine(34) in tRNA + L-cysteinyl-[protein] + A + AMP + diphosphate + H(+). Functionally, catalyzes the 2-thiolation of uridine at the wobble position (U34) of tRNA(Lys), tRNA(Glu) and tRNA(Gln), leading to the formation of s(2)U34, the first step of tRNA-mnm(5)s(2)U34 synthesis. Sulfur is provided by IscS, via a sulfur-relay system. Binds ATP and its substrate tRNAs. In Escherichia coli O1:K1 / APEC, this protein is tRNA-specific 2-thiouridylase MnmA.